The following is a 154-amino-acid chain: Ribonuclease H (154 aa).

Positions 1-142 constitute an RNase H type-1 domain; that stretch reads MLKHIDLYTD…CDELARDAAS (142 aa). Residues Asp-10, Glu-48, Asp-70, and Asp-134 each coordinate Mg(2+). A compositionally biased stretch (basic and acidic residues) spans 126 to 147; the sequence is GHPENERCDELARDAASGKELA. The segment at 126 to 154 is disordered; it reads GHPENERCDELARDAASGKELAEDTGYQP.

Belongs to the RNase H family. In terms of assembly, monomer. The cofactor is Mg(2+).

It localises to the cytoplasm. It catalyses the reaction Endonucleolytic cleavage to 5'-phosphomonoester.. Functionally, endonuclease that specifically degrades the RNA of RNA-DNA hybrids. This chain is Ribonuclease H, found in Aeromonas salmonicida (strain A449).